Reading from the N-terminus, the 316-residue chain is MTAADWRRTLNPQEQREVRELVGAATEFDAVAPVGEQVLRELGHDRTEHLLIRGSVSGGAADAVVGYLNLTPPRDAQPQMAELVVHPRARRRGIGSALARAALAKTGAANRFWAHGTLEPARATAAALGLSPVRELMQMRRSLRDLPDSVPAVPGVRIRTYAGLADDAELLRVNNAAFAYHPEQGGWTDVELAERRAEPWFDPAGLFLAFGDDDSDRPGRLLGFHWTKVHLDQPGLGEVYVVGVDPCAQGRGLGQALTAVGIEWLARRLGAGDSAADPTVMLYVEADNVAAVRTYQRLGFTTYSVDTAYAVPPAAN.

2 N-acetyltransferase domains span residues 16-153 (REVR…VPAV) and 156-316 (VRIR…PAAN). 1D-myo-inositol 2-(L-cysteinylamino)-2-deoxy-alpha-D-glucopyranoside is bound at residue E36. Acetyl-CoA contacts are provided by residues 83–85 (LVV) and 91–96 (RRGIGS). 1D-myo-inositol 2-(L-cysteinylamino)-2-deoxy-alpha-D-glucopyranoside is bound by residues E183, K228, and E238. Residues 242-244 (VGV) and 249-255 (QGRGLGQ) contribute to the acetyl-CoA site. Y283 serves as a coordination point for 1D-myo-inositol 2-(L-cysteinylamino)-2-deoxy-alpha-D-glucopyranoside. 288-293 (NVAAVR) is a binding site for acetyl-CoA.

The protein belongs to the acetyltransferase family. MshD subfamily. As to quaternary structure, monomer.

It carries out the reaction 1D-myo-inositol 2-(L-cysteinylamino)-2-deoxy-alpha-D-glucopyranoside + acetyl-CoA = mycothiol + CoA + H(+). Functionally, catalyzes the transfer of acetyl from acetyl-CoA to desacetylmycothiol (Cys-GlcN-Ins) to form mycothiol. In Mycobacterium avium (strain 104), this protein is Mycothiol acetyltransferase.